Reading from the N-terminus, the 192-residue chain is dTTP/UTP pyrophosphatase (192 aa).

The active-site Proton acceptor is aspartate 75.

It belongs to the Maf family. YhdE subfamily. A divalent metal cation serves as cofactor.

The protein localises to the cytoplasm. The enzyme catalyses dTTP + H2O = dTMP + diphosphate + H(+). The catalysed reaction is UTP + H2O = UMP + diphosphate + H(+). In terms of biological role, nucleoside triphosphate pyrophosphatase that hydrolyzes dTTP and UTP. May have a dual role in cell division arrest and in preventing the incorporation of modified nucleotides into cellular nucleic acids. In Pelodictyon phaeoclathratiforme (strain DSM 5477 / BU-1), this protein is dTTP/UTP pyrophosphatase.